The primary structure comprises 294 residues: Syntaxin-19 (294 aa).

Positions leucine 209–alanine 271 constitute a t-SNARE coiled-coil homology domain.

Belongs to the syntaxin family. In terms of assembly, interacts with EGFR.

The protein resides in the cell membrane. It is found in the cytoplasm. Its function is as follows. Plays a role in endosomal trafficking of the epidermal growth factor receptor (EGFR). The chain is Syntaxin-19 (STX19) from Homo sapiens (Human).